A 95-amino-acid chain; its full sequence is Aspartyl/glutamyl-tRNA(Asn/Gln) amidotransferase subunit C (95 aa).

This sequence belongs to the GatC family. As to quaternary structure, heterotrimer of A, B and C subunits.

It catalyses the reaction L-glutamyl-tRNA(Gln) + L-glutamine + ATP + H2O = L-glutaminyl-tRNA(Gln) + L-glutamate + ADP + phosphate + H(+). The catalysed reaction is L-aspartyl-tRNA(Asn) + L-glutamine + ATP + H2O = L-asparaginyl-tRNA(Asn) + L-glutamate + ADP + phosphate + 2 H(+). Functionally, allows the formation of correctly charged Asn-tRNA(Asn) or Gln-tRNA(Gln) through the transamidation of misacylated Asp-tRNA(Asn) or Glu-tRNA(Gln) in organisms which lack either or both of asparaginyl-tRNA or glutaminyl-tRNA synthetases. The reaction takes place in the presence of glutamine and ATP through an activated phospho-Asp-tRNA(Asn) or phospho-Glu-tRNA(Gln). This Bradyrhizobium diazoefficiens (strain JCM 10833 / BCRC 13528 / IAM 13628 / NBRC 14792 / USDA 110) protein is Aspartyl/glutamyl-tRNA(Asn/Gln) amidotransferase subunit C.